We begin with the raw amino-acid sequence, 448 residues long: Portal protein (448 aa).

The segment at 1 to 25 (MAKRGRKPKELVPGPGSIDPSDVPK) is disordered.

It belongs to the P23virus portal protein family. In terms of assembly, homododecamer. Interacts with the capsid protein. Interacts with the terminase large subunit; this interaction allows the packaging of viral DNA.

The protein resides in the virion. In terms of biological role, forms the portal vertex of the capsid. This portal plays critical roles in head assembly, genome packaging, neck/tail attachment, and genome ejection. The portal protein multimerizes as a single ring-shaped homododecamer arranged around a central channel. Forms the portal vertex of the capsid. This portal plays critical roles in head assembly, genome packaging, neck/tail attachment, and genome ejection. This is Portal protein from Thermus thermophilus (Thermus thermophilus phage P23-45).